The sequence spans 336 residues: Protein RecA (336 aa).

Residue 66–73 participates in ATP binding; sequence GNESSGKT.

The protein belongs to the RecA family.

It localises to the cytoplasm. Its function is as follows. Can catalyze the hydrolysis of ATP in the presence of single-stranded DNA, the ATP-dependent uptake of single-stranded DNA by duplex DNA, and the ATP-dependent hybridization of homologous single-stranded DNAs. It interacts with LexA causing its activation and leading to its autocatalytic cleavage. This chain is Protein RecA, found in Mycoplasma pneumoniae (strain ATCC 29342 / M129 / Subtype 1) (Mycoplasmoides pneumoniae).